Here is a 360-residue protein sequence, read N- to C-terminus: Proline-rich protein 11 (360 aa).

2 disordered regions span residues 20 to 43 (KKKE…SPER) and 174 to 201 (PPTL…PPLA). At threonine 33 the chain carries Phosphothreonine. A Phosphoserine modification is found at serine 40. Over residues 175–201 (PTLPQPASHFPPPPPPPPLPPPPPPLA) the composition is skewed to pro residues. Residues 285 to 291 (LITPGKS) carry the Phosphodegron motif. The residue at position 287 (threonine 287) is a Phosphothreonine. At serine 291 the chain carries Phosphoserine. The short motif at 296–304 (RKLLRKVDV) is the D-box element. The short motif at 316–318 (KEN) is the KEN box element. The short motif at 325 to 330 (LTPVMT) is the Phosphodegron element. The disordered stretch occupies residues 340–360 (AHPRSPTPTLPLSTSSFDEQN). Residue serine 344 is modified to Phosphoserine. A phosphothreonine mark is found at threonine 346 and threonine 348. Positions 349 to 360 (LPLSTSSFDEQN) are enriched in low complexity.

In terms of processing, ubiquitinated. Rapidly degraded by the proteasome; degradation may involve FBXW7-specific phosphorylated phosphodegron motifs. In terms of tissue distribution, ubiquitously expressed.

Its subcellular location is the cytoplasm. The protein resides in the nucleus. Functionally, plays a critical role in cell cycle progression. The protein is Proline-rich protein 11 (PRR11) of Homo sapiens (Human).